Here is a 338-residue protein sequence, read N- to C-terminus: Lipoate-protein ligase A (338 aa).

Positions 29–216 constitute a BPL/LPL catalytic domain; it reads PATQRVLFLW…AFFSHYGERV (188 aa). ATP is bound by residues R71, 76-79, and K134; that span reads GAVF. K134 is a (R)-lipoate binding site.

It belongs to the LplA family. In terms of assembly, monomer.

It is found in the cytoplasm. It catalyses the reaction L-lysyl-[lipoyl-carrier protein] + (R)-lipoate + ATP = N(6)-[(R)-lipoyl]-L-lysyl-[lipoyl-carrier protein] + AMP + diphosphate + H(+). It participates in protein modification; protein lipoylation via exogenous pathway; protein N(6)-(lipoyl)lysine from lipoate: step 1/2. The protein operates within protein modification; protein lipoylation via exogenous pathway; protein N(6)-(lipoyl)lysine from lipoate: step 2/2. Its function is as follows. Catalyzes both the ATP-dependent activation of exogenously supplied lipoate to lipoyl-AMP and the transfer of the activated lipoyl onto the lipoyl domains of lipoate-dependent enzymes. The chain is Lipoate-protein ligase A from Klebsiella pneumoniae subsp. pneumoniae (strain ATCC 700721 / MGH 78578).